A 510-amino-acid chain; its full sequence is Glutamate decarboxylase (510 aa).

107 to 109 contacts substrate; the sequence is QLS. Lys322 is modified (N6-(pyridoxal phosphate)lysine). Arg483 serves as a coordination point for substrate.

The protein belongs to the group II decarboxylase family. In terms of assembly, homodimer. Requires pyridoxal 5'-phosphate as cofactor. Expressed in the head (at protein level).

It carries out the reaction L-glutamate + H(+) = 4-aminobutanoate + CO2. Its function is as follows. Catalyzes the production of GABA. The chain is Glutamate decarboxylase (Gad1) from Drosophila melanogaster (Fruit fly).